The following is a 181-amino-acid chain: tRNA (cytidine(56)-2'-O)-methyltransferase (181 aa).

Residues Leu-88, 115 to 119 (GGEKV), and 133 to 140 (IGNQPHSE) each bind S-adenosyl-L-methionine.

The protein belongs to the aTrm56 family. In terms of assembly, homodimer.

It is found in the cytoplasm. The catalysed reaction is cytidine(56) in tRNA + S-adenosyl-L-methionine = 2'-O-methylcytidine(56) in tRNA + S-adenosyl-L-homocysteine + H(+). Functionally, specifically catalyzes the AdoMet-dependent 2'-O-ribose methylation of cytidine at position 56 in tRNAs. The chain is tRNA (cytidine(56)-2'-O)-methyltransferase from Thermofilum pendens (strain DSM 2475 / Hrk 5).